Consider the following 579-residue polypeptide: Protein O-linked-mannose beta-1,4-N-acetylglucosaminyltransferase 2 (579 aa).

The Cytoplasmic portion of the chain corresponds to Met-1–Gly-4. A helical; Signal-anchor for type II membrane protein transmembrane segment spans residues Thr-5–Leu-25. The Lumenal segment spans residues Ser-26–Thr-579. N-linked (GlcNAc...) asparagine glycosylation is found at Asn-98, Asn-275, and Asn-542. A Fibronectin type-III domain is found at His-480–Thr-579.

This sequence belongs to the glycosyltransferase 61 family.

It localises to the endoplasmic reticulum membrane. The enzyme catalyses 3-O-(alpha-D-mannosyl)-L-threonyl-[protein] + UDP-N-acetyl-alpha-D-glucosamine = 3-O-(N-acetyl-beta-D-glucosaminyl-(1-&gt;4)-alpha-D-mannosyl)-L-threonyl-[protein] + UDP + H(+). It participates in protein modification; protein glycosylation. O-linked mannose beta-1,4-N-acetylglucosaminyltransferase that transfers UDP-N-acetyl-D-glucosamine to the 4-position of the mannose to generate N-acetyl-D-glucosamine-beta-1,4-O-D-mannosylprotein. Involved in the biosynthesis of the phosphorylated O-mannosyl trisaccharide (N-acetylgalactosamine-beta-3-N-acetylglucosamine-beta-4-(phosphate-6-)mannose), a carbohydrate structure present in alpha-dystroglycan (DAG1), which is required for binding laminin G-like domain-containing extracellular proteins with high affinity. This chain is Protein O-linked-mannose beta-1,4-N-acetylglucosaminyltransferase 2 (pomgnt2), found in Tetraodon nigroviridis (Spotted green pufferfish).